Consider the following 435-residue polypeptide: Elongation factor 1-alpha (435 aa).

Residues 4 to 229 form the tr-type G domain; the sequence is KPHLNLIVIG…DMLEIPPKPV (226 aa). The interval 13–20 is G1; the sequence is GHVDHGKS. 13–20 contacts GTP; the sequence is GHVDHGKS. S20 contacts Mg(2+). The segment at 69–73 is G2; sequence GVTIN. Residues 90–93 form a G3 region; the sequence is DAPG. GTP contacts are provided by residues 90 to 94 and 152 to 155; these read DAPGH and TKMD. The segment at 152–155 is G4; the sequence is TKMD. The segment at 193–195 is G5; the sequence is VSI.

Belongs to the TRAFAC class translation factor GTPase superfamily. Classic translation factor GTPase family. EF-Tu/EF-1A subfamily.

The protein localises to the cytoplasm. It carries out the reaction GTP + H2O = GDP + phosphate + H(+). In terms of biological role, GTP hydrolase that promotes the GTP-dependent binding of aminoacyl-tRNA to the A-site of ribosomes during protein biosynthesis. The polypeptide is Elongation factor 1-alpha (Metallosphaera sedula (strain ATCC 51363 / DSM 5348 / JCM 9185 / NBRC 15509 / TH2)).